A 308-amino-acid chain; its full sequence is Zinc finger protein unc-98 (308 aa).

C2H2-type zinc fingers lie at residues 111–133 (YKCR…ERIH) and 139–161 (YVCG…AAQH). The C2H2-type 3; degenerate zinc finger occupies 166-186 (GFKCDCGRTFFSYTEMLYHKH). Residues 244–266 (YICEYCSKSYSDSRGLAYHMYSH) form a C2H2-type 4 zinc finger.

It localises to the nucleus. The protein resides in the cytoplasm. In terms of biological role, probable transcription factor. Required for muscle structure. Its dual subcellular localization suggests that it may function both as a muscle adhesion complex protein and as a transcription factor, or work together with transcription factors, to influence gene expression. Thought to act as a molecular bridge between unc-97 and mhc-a at the M-line of muscles, possibly in a signaling role. This is Zinc finger protein unc-98 from Caenorhabditis briggsae.